The primary structure comprises 372 residues: 4-hydroxy-3-methylbut-2-en-1-yl diphosphate synthase (flavodoxin) (372 aa).

Residues Cys-270, Cys-273, Cys-305, and Glu-312 each coordinate [4Fe-4S] cluster.

The protein belongs to the IspG family. The cofactor is [4Fe-4S] cluster.

It carries out the reaction (2E)-4-hydroxy-3-methylbut-2-enyl diphosphate + oxidized [flavodoxin] + H2O + 2 H(+) = 2-C-methyl-D-erythritol 2,4-cyclic diphosphate + reduced [flavodoxin]. It participates in isoprenoid biosynthesis; isopentenyl diphosphate biosynthesis via DXP pathway; isopentenyl diphosphate from 1-deoxy-D-xylulose 5-phosphate: step 5/6. In terms of biological role, converts 2C-methyl-D-erythritol 2,4-cyclodiphosphate (ME-2,4cPP) into 1-hydroxy-2-methyl-2-(E)-butenyl 4-diphosphate. The sequence is that of 4-hydroxy-3-methylbut-2-en-1-yl diphosphate synthase (flavodoxin) from Vibrio campbellii (strain ATCC BAA-1116).